We begin with the raw amino-acid sequence, 531 residues long: Methyl-accepting chemotaxis protein McpN (531 aa).

Over 1 to 24 (MNESVARVFDRILRGLGLKTLNAQ) the chain is Cytoplasmic. Residues 25-45 (FLLSYALMFGLAACASVALYL) form a helical membrane-spanning segment. Topologically, residues 46–174 (SMSISPETIN…LMSARADSVQ (129 aa)) are periplasmic. The pilJ-type stretch occupies residues 52-140 (ETINVAGAQR…AMLDQVAQPA (89 aa)). The N-box signature appears at 54-65 (INVAGAQRMLSQ). Residue arginine 61 participates in nitrate binding. A helical membrane pass occupies residues 175–195 (HTQMWIAFGCLLAILVLVVLG). Residues 196 to 531 (RQFGLAPLMR…LRVVLGRFRT (336 aa)) are Cytoplasmic-facing. The 54-residue stretch at 201 to 254 (APLMRQLRGLEVALTEVGAANFTHALAAGHADNEIGRIVAGYERMRQDVSGLLA) folds into the HAMP domain. One can recognise a Methyl-accepting transducer domain in the interval 259 to 495 (SAAETDKDVA…DIDRNITNVS (237 aa)).

Belongs to the methyl-accepting chemotaxis (MCP) protein family. In terms of assembly, ligand free ligand-binding domain (LBD) is present in a monomer-dimer equilibrium. Nitrate binding to the periplasmic LBD stabilizes the homodimer.

It localises to the cell inner membrane. Functionally, chemotactic-signal transducers respond to changes in the concentration of attractants and repellents in the environment, transduce a signal from the outside to the inside of the cell, and facilitate sensory adaptation through the variation of the level of methylation. McpN is a chemoreceptor that recognizes specifically nitrate and mediates chemoattraction. Binds nitrate specifically and shows no affinity for other ligands such as nitrite. McpN-mediated taxis occurs only under nitrate starvation conditions. The protein is Methyl-accepting chemotaxis protein McpN of Pseudomonas aeruginosa (strain ATCC 15692 / DSM 22644 / CIP 104116 / JCM 14847 / LMG 12228 / 1C / PRS 101 / PAO1).